Here is a 459-residue protein sequence, read N- to C-terminus: Cysteine--tRNA ligase (459 aa).

C31 is a Zn(2+) binding site. Positions 33–43 (PTVYDNPHIGN) match the 'HIGH' region motif. Zn(2+) contacts are provided by C216, H241, and E245. The short motif at 274-278 (KMSKS) is the 'KMSKS' region element. ATP is bound at residue K277.

This sequence belongs to the class-I aminoacyl-tRNA synthetase family. Monomer. It depends on Zn(2+) as a cofactor.

The protein localises to the cytoplasm. The enzyme catalyses tRNA(Cys) + L-cysteine + ATP = L-cysteinyl-tRNA(Cys) + AMP + diphosphate. The protein is Cysteine--tRNA ligase of Rickettsia massiliae (strain Mtu5).